Reading from the N-terminus, the 81-residue chain is uncharacterized protein (81 aa).

The next 2 helical transmembrane spans lie at 27–47 (ASLL…LNLT) and 54–74 (IFGA…IFIM).

It is found in the cell membrane. This is an uncharacterized protein from Bacillus subtilis (strain 168).